We begin with the raw amino-acid sequence, 685 residues long: Glycine--tRNA ligase beta subunit (685 aa).

Residues 58 to 77 form a disordered region; it reads GLTAQSPTTREERKGPRTDA. A compositionally biased stretch (basic and acidic residues) spans 66-77; it reads TREERKGPRTDA.

The protein belongs to the class-II aminoacyl-tRNA synthetase family. In terms of assembly, tetramer of two alpha and two beta subunits.

The protein localises to the cytoplasm. The catalysed reaction is tRNA(Gly) + glycine + ATP = glycyl-tRNA(Gly) + AMP + diphosphate. This chain is Glycine--tRNA ligase beta subunit, found in Paracoccus denitrificans (strain Pd 1222).